The primary structure comprises 344 residues: MQTLTIIRPDDMHLHLRDGDALKAVVPYTARQMGRAVIMPNLKPPVVSVADALAYKARIMAALPEGSAFEPLMTLYLTDQATPELVREAKAAGIVAFKLYPAGATTNSDSGVTDLFKLIPVLEEMAKQDILFLVHGEVTDPEIDIFDREAAFIERVMKPVLAQVPNLKVVFEHITTAEAARLVLEAGDNVAASVTPQHLLLNRNDLLVGGVRPHHFCLPVLKRETHRQALVAAVTGEKAHKFFLGTDSAPHAKSAKENACGCAGMFSAMTAVELYAEVFEKAGALDKLEAFASKNGARFYGIPENTDTITLVKQSQTVPASVPYGDGELVPMRAGGEIGWMVQY.

The Zn(2+) site is built by H13 and H15. Substrate is bound by residues 15–17 (HLR) and N41. K98, H135, and H173 together coordinate Zn(2+). K98 is modified (N6-carboxylysine). H135 contacts substrate. L218 provides a ligand contact to substrate. D247 provides a ligand contact to Zn(2+). D247 is a catalytic residue. Substrate contacts are provided by H251 and A263.

This sequence belongs to the metallo-dependent hydrolases superfamily. DHOase family. Class II DHOase subfamily. As to quaternary structure, homodimer. Requires Zn(2+) as cofactor.

The enzyme catalyses (S)-dihydroorotate + H2O = N-carbamoyl-L-aspartate + H(+). It functions in the pathway pyrimidine metabolism; UMP biosynthesis via de novo pathway; (S)-dihydroorotate from bicarbonate: step 3/3. Functionally, catalyzes the reversible cyclization of carbamoyl aspartate to dihydroorotate. The chain is Dihydroorotase from Neisseria meningitidis serogroup C / serotype 2a (strain ATCC 700532 / DSM 15464 / FAM18).